The sequence spans 692 residues: Elongation factor G (692 aa).

The 276-residue stretch at 8 to 283 (KNTRNIGIMA…AVVDYLPSPV (276 aa)) folds into the tr-type G domain. GTP-binding positions include 17 to 24 (AHIDAGKT), 81 to 85 (DTPGH), and 135 to 138 (NKMD).

Belongs to the TRAFAC class translation factor GTPase superfamily. Classic translation factor GTPase family. EF-G/EF-2 subfamily.

Its subcellular location is the cytoplasm. Catalyzes the GTP-dependent ribosomal translocation step during translation elongation. During this step, the ribosome changes from the pre-translocational (PRE) to the post-translocational (POST) state as the newly formed A-site-bound peptidyl-tRNA and P-site-bound deacylated tRNA move to the P and E sites, respectively. Catalyzes the coordinated movement of the two tRNA molecules, the mRNA and conformational changes in the ribosome. In Exiguobacterium sp. (strain ATCC BAA-1283 / AT1b), this protein is Elongation factor G.